The following is a 227-amino-acid chain: NAD(P)H-hydrate epimerase (227 aa).

In terms of domain architecture, YjeF N-terminal spans 10–227 (MRALETAAFN…GKIMVQYIGL (218 aa)). 62–66 (NNGGD) serves as a coordination point for (6S)-NADPHX. Positions 63 and 142 each coordinate K(+). (6S)-NADPHX contacts are provided by residues 146–152 (GIGLNRP) and Asp176. Ser179 serves as a coordination point for K(+).

The protein belongs to the NnrE/AIBP family. Requires K(+) as cofactor.

The enzyme catalyses (6R)-NADHX = (6S)-NADHX. It carries out the reaction (6R)-NADPHX = (6S)-NADPHX. In terms of biological role, catalyzes the epimerization of the S- and R-forms of NAD(P)HX, a damaged form of NAD(P)H that is a result of enzymatic or heat-dependent hydration. This is a prerequisite for the S-specific NAD(P)H-hydrate dehydratase to allow the repair of both epimers of NAD(P)HX. The chain is NAD(P)H-hydrate epimerase from Roseobacter litoralis (strain ATCC 49566 / DSM 6996 / JCM 21268 / NBRC 15278 / OCh 149).